The primary structure comprises 383 residues: Omega-6 fatty acid desaturase, endoplasmic reticulum isozyme 2 (383 aa).

The next 3 helical transmembrane spans lie at 61–81 (TIAF…PGPL), 85–105 (GMAI…VIAH), and 117–137 (LLDD…YFSW). A Histidine box-1 motif is present at residues 105 to 109 (HECGH). The Histidine box-2 signature appears at 141–145 (HRRHH). The next 3 membrane-spanning stretches (helical) occupy residues 179 to 199 (VLTL…LNVS), 225 to 245 (IYIS…LAMA), and 249 to 269 (AWVV…LVLI). The Histidine box-3 signature appears at 315-319 (HVAHH).

This sequence belongs to the fatty acid desaturase type 1 family.

Its subcellular location is the endoplasmic reticulum membrane. Its pathway is lipid metabolism; polyunsaturated fatty acid biosynthesis. Its function is as follows. ER (microsomal) omega-6 fatty acid desaturase introduces the second double bond in the biosynthesis of 18:3 fatty acids, important constituents of plant membranes. It is thought to use cytochrome b5 as an electron donor and to act on fatty acids esterified to phosphatidylcholine and, possibly, other phospholipids. The polypeptide is Omega-6 fatty acid desaturase, endoplasmic reticulum isozyme 2 (FAD2-2) (Glycine max (Soybean)).